The chain runs to 392 residues: Phosphoglycerate kinase (392 aa).

Substrate is bound by residues 21–23 (DFN), R36, 59–62 (HLGR), R118, and R151. ATP contacts are provided by residues K201, G292, E323, and 349–352 (GGDS).

Belongs to the phosphoglycerate kinase family. Monomer.

It is found in the cytoplasm. It carries out the reaction (2R)-3-phosphoglycerate + ATP = (2R)-3-phospho-glyceroyl phosphate + ADP. It functions in the pathway carbohydrate degradation; glycolysis; pyruvate from D-glyceraldehyde 3-phosphate: step 2/5. This Borrelia duttonii (strain Ly) protein is Phosphoglycerate kinase.